Reading from the N-terminus, the 293-residue chain is Protease HtpX homolog (293 aa).

2 consecutive transmembrane segments (helical) span residues 4-24 and 38-58; these read IFLFLITNLAVMVVLSATMRI and LTGLLIFSAVIGFTGAIISLL. His146 is a Zn(2+) binding site. Residue Glu147 is part of the active site. His150 lines the Zn(2+) pocket. The next 2 helical transmembrane spans lie at 161 to 181 and 198 to 218; these read LIQGVVNTFVVFLARVVGYFV and ATVIVCEIVFGILASIIVAWF. Glu223 provides a ligand contact to Zn(2+).

It belongs to the peptidase M48B family. Zn(2+) serves as cofactor.

It is found in the cell inner membrane. This chain is Protease HtpX homolog, found in Bordetella parapertussis (strain 12822 / ATCC BAA-587 / NCTC 13253).